We begin with the raw amino-acid sequence, 62 residues long: Photosystem II reaction center protein Z (62 aa).

The next 2 helical transmembrane spans lie at 8-28 (AVFALIATSSILLISVPVVFA) and 41-61 (FSGTSLWLGLVFLVGILNSLI).

Belongs to the PsbZ family. PSII is composed of 1 copy each of membrane proteins PsbA, PsbB, PsbC, PsbD, PsbE, PsbF, PsbH, PsbI, PsbJ, PsbK, PsbL, PsbM, PsbT, PsbY, PsbZ, Psb30/Ycf12, at least 3 peripheral proteins of the oxygen-evolving complex and a large number of cofactors. It forms dimeric complexes.

The protein localises to the plastid. Its subcellular location is the chloroplast thylakoid membrane. Its function is as follows. May control the interaction of photosystem II (PSII) cores with the light-harvesting antenna, regulates electron flow through the 2 photosystem reaction centers. PSII is a light-driven water plastoquinone oxidoreductase, using light energy to abstract electrons from H(2)O, generating a proton gradient subsequently used for ATP formation. The polypeptide is Photosystem II reaction center protein Z (Spinacia oleracea (Spinach)).